The primary structure comprises 1374 residues: Y' element ATP-dependent helicase YLL067C (1374 aa).

The tract at residues 321–345 (AGEAASSDHDQKISRVTRKRPREPK) is disordered. In terms of domain architecture, Helicase ATP-binding spans 375–552 (EIYMADTPSV…LQRIGLTGLA (178 aa)). 388-395 (APPGYGKT) serves as a coordination point for ATP. The short motif at 498 to 501 (DEFH) is the DEAH box element. The region spanning 609–758 (KLLLALFEIE…EFYGLESKKG (150 aa)) is the Helicase C-terminal domain. Over residues 832–1011 (ANASTNATTN…ATTTESTNAS (180 aa)) the composition is skewed to low complexity. Positions 832–1035 (ANASTNATTN…RFHPVTDINK (204 aa)) are disordered. Over residues 1012-1035 (AKEDANKDGNAEDNRFHPVTDINK) the composition is skewed to basic and acidic residues.

The protein belongs to the helicase family. Yeast subtelomeric Y' repeat subfamily.

In terms of biological role, catalyzes DNA unwinding and is involved in telomerase-independent telomere maintenance. This is Y' element ATP-dependent helicase YLL067C from Saccharomyces cerevisiae (strain ATCC 204508 / S288c) (Baker's yeast).